The chain runs to 155 residues: Aspartate carbamoyltransferase regulatory chain (155 aa).

Residues Cys-110, Cys-115, Cys-139, and Cys-142 each coordinate Zn(2+).

It belongs to the PyrI family. As to quaternary structure, contains catalytic and regulatory chains. Zn(2+) serves as cofactor.

In terms of biological role, involved in allosteric regulation of aspartate carbamoyltransferase. The polypeptide is Aspartate carbamoyltransferase regulatory chain (Yersinia pestis bv. Antiqua (strain Antiqua)).